We begin with the raw amino-acid sequence, 356 residues long: Protein-arginine kinase (356 aa).

The 231-residue stretch at Ile-24–Ala-254 folds into the Phosphagen kinase C-terminal domain. Residues Ser-27–Arg-31, His-91, Arg-125, Arg-176–Met-180, and Arg-207–Glu-212 contribute to the ATP site. Residues Arg-337–Ala-342 carry the RDXXRA motif of the pArg binding pocket involved in allosteric regulation motif.

This sequence belongs to the ATP:guanido phosphotransferase family.

The enzyme catalyses L-arginyl-[protein] + ATP = N(omega)-phospho-L-arginyl-[protein] + ADP + H(+). Appears to be allosterically activated by the binding of pArg-containing polypeptides to the pArg-binding pocket localized in the C-terminal domain of McsB. Functionally, catalyzes the specific phosphorylation of arginine residues in a large number of proteins. Is part of the bacterial stress response system. Protein arginine phosphorylation has a physiologically important role and is involved in the regulation of many critical cellular processes, such as protein homeostasis, motility, competence, and stringent and stress responses, by regulating gene expression and protein activity. In Halalkalibacterium halodurans (strain ATCC BAA-125 / DSM 18197 / FERM 7344 / JCM 9153 / C-125) (Bacillus halodurans), this protein is Protein-arginine kinase.